The chain runs to 189 residues: Pyridoxal 5'-phosphate synthase subunit PdxT (189 aa).

46 to 48 serves as a coordination point for L-glutamine; it reads GES. Cys-78 acts as the Nucleophile in catalysis. L-glutamine-binding positions include Arg-107 and 136–137; that span reads IR. Active-site charge relay system residues include His-173 and Glu-175.

The protein belongs to the glutaminase PdxT/SNO family. As to quaternary structure, in the presence of PdxS, forms a dodecamer of heterodimers. Only shows activity in the heterodimer.

The enzyme catalyses aldehydo-D-ribose 5-phosphate + D-glyceraldehyde 3-phosphate + L-glutamine = pyridoxal 5'-phosphate + L-glutamate + phosphate + 3 H2O + H(+). The catalysed reaction is L-glutamine + H2O = L-glutamate + NH4(+). It participates in cofactor biosynthesis; pyridoxal 5'-phosphate biosynthesis. Catalyzes the hydrolysis of glutamine to glutamate and ammonia as part of the biosynthesis of pyridoxal 5'-phosphate. The resulting ammonia molecule is channeled to the active site of PdxS. This chain is Pyridoxal 5'-phosphate synthase subunit PdxT, found in Roseiflexus sp. (strain RS-1).